We begin with the raw amino-acid sequence, 83 residues long: Small integral membrane protein 10 (83 aa).

A helical transmembrane segment spans residues 64-82 (FFYFYILASVILNVHLQVY).

The protein localises to the membrane. This chain is Small integral membrane protein 10 (SMIM10), found in Homo sapiens (Human).